A 734-amino-acid polypeptide reads, in one-letter code: Protein arginine N-methyltransferase 5 (734 aa).

The segment covering 1–16 (MSNRTYADNLFPQQVA) has biased composition (polar residues). The segment at 1-39 (MSNRTYADNLFPQQVAEQHEEQMSSGSSPKSNSPSRSIS) is disordered. Over residues 24-39 (SSGSSPKSNSPSRSIS) the composition is skewed to low complexity. A TIM barrel region spans residues 42–329 (EAANSRIHIG…EYSQALRHAV (288 aa)). One can recognise an SAM-dependent MTase PRMT-type domain in the interval 360 to 706 (LQAPLQPLSE…VDNTGVWYEW (347 aa)). Position 376 (Tyr376) interacts with S-adenosyl-L-methionine. Phe379 contacts a protein. Residues 385-386 (KY), Glu450, and 477-478 (DM) each bind S-adenosyl-L-methionine. 2 residues coordinate a protein: Glu499 and Glu508. Active-site proton donor/acceptor residues include Glu499 and Glu508. The interval 529-734 (PQKYTSYVKP…PNGESYYMRM (206 aa)) is beta barrel. The dimerization stretch occupies residues 541 to 589 (STHIHQTIKAQSIPYLSRAIPSHGRGEPELDEDEMWIQKYPQGHVRNNM).

This sequence belongs to the class I-like SAM-binding methyltransferase superfamily. Protein arginine N-methyltransferase family. Homodimer. Interacts with cep-1 (via C-terminus domain); does not methylate cep-1. Interacts with cbp-1 (via N-terminus domain and HAT domain); the interaction results in methylation of cbp-1. Component of a complex that contains cep-1 and cbp-1. May interact with pid-2, pid-4 and pid-5.

Its subcellular location is the nucleus. The enzyme catalyses L-arginyl-[protein] + 2 S-adenosyl-L-methionine = N(omega),N(omega)'-dimethyl-L-arginyl-[protein] + 2 S-adenosyl-L-homocysteine + 2 H(+). Functionally, catalyzes the symmetrical dimethylation of arginine residues in targets such as small nuclear ribonucleoproteins, histone H2A/H4 and cbp-1. Dimethylation occurs in a distributive manner where the protein is released after the addition of the first methyl group prior to rebinding for the addition of the second methyl group. Plays a role in the negative regulation of DNA damage-induced apoptosis. By methylating cbp-1, may prevent apoptosis by repressing the capacity of cbp-1 to enhance cep-1 dependent transcription activation of the programmed cell death activator egl-1. Plays a role in heat and oxidative stress resistance. The chain is Protein arginine N-methyltransferase 5 from Caenorhabditis elegans.